Reading from the N-terminus, the 349-residue chain is Galactose-1-phosphate uridylyltransferase (349 aa).

A UDP-alpha-D-glucose-binding site is contributed by 29-32 (RAKR). Zn(2+) contacts are provided by C53 and C56. Position 78–79 (78–79 (ND)) interacts with UDP-alpha-D-glucose. Zn(2+) is bound at residue H116. Residues N154 and 160–162 (GCS) each bind UDP-alpha-D-glucose. H165 lines the Zn(2+) pocket. The Tele-UMP-histidine intermediate role is filled by H167. Q169 serves as a coordination point for UDP-alpha-D-glucose. Positions 183, 282, 297, and 299 each coordinate Fe cation. UDP-alpha-D-glucose contacts are provided by residues 312 to 313 (KF), 317 to 318 (YE), and Q324.

This sequence belongs to the galactose-1-phosphate uridylyltransferase type 1 family. Zn(2+) serves as cofactor.

The catalysed reaction is alpha-D-galactose 1-phosphate + UDP-alpha-D-glucose = alpha-D-glucose 1-phosphate + UDP-alpha-D-galactose. It functions in the pathway carbohydrate metabolism; galactose metabolism. This is Galactose-1-phosphate uridylyltransferase (galT) from Haemophilus influenzae (strain ATCC 51907 / DSM 11121 / KW20 / Rd).